The following is a 240-amino-acid chain: tRNA pseudouridine synthase B (240 aa).

The active-site Nucleophile is the aspartate 54.

It belongs to the pseudouridine synthase TruB family. Type 1 subfamily.

The enzyme catalyses uridine(55) in tRNA = pseudouridine(55) in tRNA. Its function is as follows. Responsible for synthesis of pseudouridine from uracil-55 in the psi GC loop of transfer RNAs. In Chlorobaculum tepidum (strain ATCC 49652 / DSM 12025 / NBRC 103806 / TLS) (Chlorobium tepidum), this protein is tRNA pseudouridine synthase B.